Here is a 238-residue protein sequence, read N- to C-terminus: Ribonuclease PH (238 aa).

Residues R86 and 124–126 (GTR) contribute to the phosphate site.

Belongs to the RNase PH family. As to quaternary structure, homohexameric ring arranged as a trimer of dimers.

The enzyme catalyses tRNA(n+1) + phosphate = tRNA(n) + a ribonucleoside 5'-diphosphate. Functionally, phosphorolytic 3'-5' exoribonuclease that plays an important role in tRNA 3'-end maturation. Removes nucleotide residues following the 3'-CCA terminus of tRNAs; can also add nucleotides to the ends of RNA molecules by using nucleoside diphosphates as substrates, but this may not be physiologically important. Probably plays a role in initiation of 16S rRNA degradation (leading to ribosome degradation) during starvation. This Phenylobacterium zucineum (strain HLK1) protein is Ribonuclease PH.